Reading from the N-terminus, the 241-residue chain is 3-deoxy-manno-octulosonate cytidylyltransferase (241 aa).

It belongs to the KdsB family.

The protein localises to the cytoplasm. The enzyme catalyses 3-deoxy-alpha-D-manno-oct-2-ulosonate + CTP = CMP-3-deoxy-beta-D-manno-octulosonate + diphosphate. The protein operates within nucleotide-sugar biosynthesis; CMP-3-deoxy-D-manno-octulosonate biosynthesis; CMP-3-deoxy-D-manno-octulosonate from 3-deoxy-D-manno-octulosonate and CTP: step 1/1. It participates in bacterial outer membrane biogenesis; lipopolysaccharide biosynthesis. In terms of biological role, activates KDO (a required 8-carbon sugar) for incorporation into bacterial lipopolysaccharide in Gram-negative bacteria. This is 3-deoxy-manno-octulosonate cytidylyltransferase from Rickettsia typhi (strain ATCC VR-144 / Wilmington).